Consider the following 317-residue polypeptide: Beta-ketoacyl-[acyl-carrier-protein] synthase III (317 aa).

Residues cysteine 112 and histidine 244 contribute to the active site. An ACP-binding region spans residues glutamine 245–arginine 249. Residue asparagine 274 is part of the active site.

This sequence belongs to the thiolase-like superfamily. FabH family. Homodimer.

The protein resides in the cytoplasm. It catalyses the reaction malonyl-[ACP] + acetyl-CoA + H(+) = 3-oxobutanoyl-[ACP] + CO2 + CoA. Its pathway is lipid metabolism; fatty acid biosynthesis. Functionally, catalyzes the condensation reaction of fatty acid synthesis by the addition to an acyl acceptor of two carbons from malonyl-ACP. Catalyzes the first condensation reaction which initiates fatty acid synthesis and may therefore play a role in governing the total rate of fatty acid production. Possesses both acetoacetyl-ACP synthase and acetyl transacylase activities. Its substrate specificity determines the biosynthesis of branched-chain and/or straight-chain of fatty acids. This chain is Beta-ketoacyl-[acyl-carrier-protein] synthase III, found in Rickettsia felis (strain ATCC VR-1525 / URRWXCal2) (Rickettsia azadi).